Reading from the N-terminus, the 236-residue chain is Biosynthetic peptidoglycan transglycosylase (236 aa).

Residues 17 to 37 (IVILVALALLALPYLLTILYG) form a helical membrane-spanning segment.

This sequence belongs to the glycosyltransferase 51 family.

The protein resides in the cell inner membrane. The enzyme catalyses [GlcNAc-(1-&gt;4)-Mur2Ac(oyl-L-Ala-gamma-D-Glu-L-Lys-D-Ala-D-Ala)](n)-di-trans,octa-cis-undecaprenyl diphosphate + beta-D-GlcNAc-(1-&gt;4)-Mur2Ac(oyl-L-Ala-gamma-D-Glu-L-Lys-D-Ala-D-Ala)-di-trans,octa-cis-undecaprenyl diphosphate = [GlcNAc-(1-&gt;4)-Mur2Ac(oyl-L-Ala-gamma-D-Glu-L-Lys-D-Ala-D-Ala)](n+1)-di-trans,octa-cis-undecaprenyl diphosphate + di-trans,octa-cis-undecaprenyl diphosphate + H(+). The protein operates within cell wall biogenesis; peptidoglycan biosynthesis. Its function is as follows. Peptidoglycan polymerase that catalyzes glycan chain elongation from lipid-linked precursors. This chain is Biosynthetic peptidoglycan transglycosylase, found in Rhodopseudomonas palustris (strain ATCC BAA-98 / CGA009).